Consider the following 552-residue polypeptide: Urocanate hydratase (552 aa).

NAD(+)-binding positions include 49 to 50 (GG), Gln-127, 173 to 175 (GMG), Asp-193, 239 to 240 (NA), 260 to 264 (QTSAH), 270 to 271 (YI), and Tyr-319. Cys-407 is an active-site residue. Residue Gly-489 coordinates NAD(+).

Belongs to the urocanase family. NAD(+) serves as cofactor.

It is found in the cytoplasm. It catalyses the reaction 4-imidazolone-5-propanoate = trans-urocanate + H2O. It functions in the pathway amino-acid degradation; L-histidine degradation into L-glutamate; N-formimidoyl-L-glutamate from L-histidine: step 2/3. Its function is as follows. Catalyzes the conversion of urocanate to 4-imidazolone-5-propionate. The protein is Urocanate hydratase of Bacillus anthracis (strain CDC 684 / NRRL 3495).